Reading from the N-terminus, the 245-residue chain is Protein ARV 1 (245 aa).

Transmembrane regions (helical) follow at residues 70–90, 117–137, 163–183, 200–220, and 224–244; these read INPATVNIQHLLWKLVFAYLL, IKVLIGVLSANAAFIISFAIA, IFLLAMLVWEFPMSVIFFVDI, TMTRCIAVCLIAHLIRFLVGQ, and PTIFLIQIGSLLQYMSYFFRI.

Belongs to the ARV1 family. In terms of tissue distribution, restricted to tissues in which cells are actively dividing or expanding. Mostly expressed in roots and flowers, and, to a lower extent, in stems and leaves.

The protein resides in the endoplasmic reticulum membrane. Functionally, mediator of sterol homeostasis involved in sterol uptake, trafficking and distribution into membranes. Also regulates the sphingolipid metabolism. This Arabidopsis thaliana (Mouse-ear cress) protein is Protein ARV 1.